Consider the following 354-residue polypeptide: Pyrimidine monooxygenase RutA (354 aa).

FMN is bound by residues 49-50, asparagine 115, glutamate 124, 140-141, and serine 189; these read IK and RY.

Belongs to the NtaA/SnaA/DszA monooxygenase family. RutA subfamily.

The catalysed reaction is uracil + FMNH2 + NADH + O2 = (Z)-3-ureidoacrylate + FMN + NAD(+) + H2O + H(+). It catalyses the reaction thymine + FMNH2 + NADH + O2 = (Z)-2-methylureidoacrylate + FMN + NAD(+) + H2O + H(+). Catalyzes the pyrimidine ring opening between N-3 and C-4 by an unusual flavin hydroperoxide-catalyzed mechanism, adding oxygen atoms in the process to yield ureidoacrylate peracid, that immediately reacts with FMN forming ureidoacrylate and FMN-N(5)-oxide. The FMN-N(5)-oxide reacts spontaneously with NADH to produce FMN. Requires the flavin reductase RutF to regenerate FMN in vivo. This chain is Pyrimidine monooxygenase RutA, found in Caulobacter sp. (strain K31).